The chain runs to 314 residues: MASVSPSSLLLLFFALLSPLLPLTSALVFREYIGSQFNDVKFSDVPINPDVDFHFILAFAIDYTSGSSPTPTNGNFKPFWDTNNLSPSQVAAVKRTHSNVKVSLSLGGDSVGGKNVFFSPSSVSSWVENAVSSLTRIIKQYHLDGIDIDYEHFKGDPNTFAECIGQLVTRLKKNEVVSFVSIAPFDDAQVQSHYQALWEKYGHQIDYVNFQFYAYSARTSVEQFLKYFEEQSSNYHGGKVLVSFSTDSSGGLKPDNGFFRACSILKKQGKLHGIFVWSADDSLMSNNVFRYEMQAQSMLASVNSRDRAMYWSLL.

Positions 1-26 (MASVSPSSLLLLFFALLSPLLPLTSA) are cleaved as a signal peptide. The GH18 domain maps to 27 to 296 (LVFREYIGSQ…NVFRYEMQAQ (270 aa)). Glu-151 functions as the Proton donor in the catalytic mechanism.

Belongs to the glycosyl hydrolase 18 family. Chitinase class II subfamily.

It catalyses the reaction Random endo-hydrolysis of N-acetyl-beta-D-glucosaminide (1-&gt;4)-beta-linkages in chitin and chitodextrins.. Able to cleave glycolchitin. In Tulipa saxatilis subsp. bakeri (Tulip), this protein is Chitinase 1.